A 396-amino-acid chain; its full sequence is 1-deoxy-D-xylulose 5-phosphate reductoisomerase (396 aa).

Thr-15, Gly-16, Ser-17, Ile-18, Gly-41, and Asn-129 together coordinate NADPH. A 1-deoxy-D-xylulose 5-phosphate-binding site is contributed by Lys-130. Glu-131 contacts NADPH. Asp-155 is a Mn(2+) binding site. 1-deoxy-D-xylulose 5-phosphate-binding residues include Ser-156, Glu-157, Ser-182, and His-205. Mn(2+) is bound at residue Glu-157. Residue Gly-211 coordinates NADPH. Residues Ser-218, Asn-223, Lys-224, and Glu-227 each contribute to the 1-deoxy-D-xylulose 5-phosphate site. Glu-227 is a Mn(2+) binding site.

Belongs to the DXR family. Mg(2+) serves as cofactor. It depends on Mn(2+) as a cofactor.

The catalysed reaction is 2-C-methyl-D-erythritol 4-phosphate + NADP(+) = 1-deoxy-D-xylulose 5-phosphate + NADPH + H(+). The protein operates within isoprenoid biosynthesis; isopentenyl diphosphate biosynthesis via DXP pathway; isopentenyl diphosphate from 1-deoxy-D-xylulose 5-phosphate: step 1/6. Its function is as follows. Catalyzes the NADPH-dependent rearrangement and reduction of 1-deoxy-D-xylulose-5-phosphate (DXP) to 2-C-methyl-D-erythritol 4-phosphate (MEP). The chain is 1-deoxy-D-xylulose 5-phosphate reductoisomerase from Xanthomonas oryzae pv. oryzae (strain MAFF 311018).